The sequence spans 709 residues: Frizzled-6 (709 aa).

Residues 1–18 (MERSPFLLACILLPLVRG) form the signal peptide. In terms of domain architecture, FZ spans 19 to 132 (HSLFTCEPIT…CNRLPHCDDT (114 aa)). At 19–201 (HSLFTCEPIT…SDELDFAKSF (183 aa)) the chain is on the extracellular side. Disulfide bonds link Cys-24-Cys-85, Cys-32-Cys-78, Cys-69-Cys-106, Cys-95-Cys-129, and Cys-99-Cys-123. Residue Asn-38 is glycosylated (N-linked (GlcNAc...) asparagine). Residues 202–222 (IGIVSIFCLCATLFTFLTFLI) form a helical membrane-spanning segment. The Cytoplasmic segment spans residues 223–233 (DVRRFRYPERP). A helical membrane pass occupies residues 234–254 (IIYYSVCYSIVSLMYFVGFLL). The Extracellular segment spans residues 255-284 (GNSTACNKADEKLELGDTVVLGSKNKACSV). N-linked (GlcNAc...) asparagine glycosylation is present at Asn-256. Residues 285–305 (VFMFLYFFTMAGTVWWVILTI) form a helical membrane-spanning segment. Topologically, residues 306-324 (TWFLAAGRKWSCEAIEQKA) are cytoplasmic. Residues 325 to 345 (VWFHAVAWGAPGFLTVMLLAM) form a helical membrane-spanning segment. At 346–370 (NKVEGDNISGVCFVGLYDLDASRYF) the chain is on the extracellular side. Asn-352 carries N-linked (GlcNAc...) asparagine glycosylation. A helical membrane pass occupies residues 371–391 (VLLPLCLCVFVGLSLLLAGII). Over 392-416 (SLNHVRQVIQHDGRNQEKLKKFMIR) the chain is Cytoplasmic. The chain crosses the membrane as a helical span at residues 417–437 (IGVFSGLYLVPLVTLLGCYVY). Topologically, residues 438 to 473 (ELVNRITWEMTWFSDHCHQYRIPCPYQANPKARPEL) are extracellular. A helical membrane pass occupies residues 474 to 494 (ALFMIKYLMTLIVGISAVFWV). The Cytoplasmic segment spans residues 495–709 (GSKKTCTEWA…EQGAGSHSDA (215 aa)). The Lys-Thr-X-X-X-Trp motif, mediates interaction with the PDZ domain of Dvl family members signature appears at 498 to 503 (KTCTEW). A compositionally biased stretch (polar residues) spans 583–594 (QETSTEVHTSPE). Residues 583-709 (QETSTEVHTS…EQGAGSHSDA (127 aa)) are disordered. Residues 596 to 616 (SVKEGRADRANTPSAKDRDCG) are compositionally biased toward basic and acidic residues. The span at 620-629 (GPSSKLSGNR) shows a compositional bias: polar residues. Positions 630–644 (NGRESRAGGLKERSN) are enriched in basic and acidic residues. Residue Ser-656 is modified to Phosphoserine. Over residues 669–690 (CSTSQAASSPEPTSLKGSTSLP) the composition is skewed to polar residues. Residues 697-709 (ARKEQGAGSHSDA) are compositionally biased toward basic and acidic residues.

This sequence belongs to the G-protein coupled receptor Fz/Smo family. In terms of assembly, interacts with LMBR1L. In terms of processing, ubiquitinated by ZNRF3, leading to its degradation by the proteasome. Expressed in both hair cells and supporting cells in the utricle, saccule, cristae and the organ of Corti in the inner ear (at protein level).

Its subcellular location is the membrane. It localises to the cell membrane. The protein localises to the cell surface. The protein resides in the apical cell membrane. It is found in the cytoplasmic vesicle membrane. Its subcellular location is the endoplasmic reticulum membrane. In terms of biological role, receptor for Wnt proteins. Most of frizzled receptors are coupled to the beta-catenin canonical signaling pathway, which leads to the activation of disheveled proteins, inhibition of GSK-3 kinase, nuclear accumulation of beta-catenin and activation of Wnt target genes. A second signaling pathway involving PKC and calcium fluxes has been seen for some family members, but it is not yet clear if it represents a distinct pathway or if it can be integrated in the canonical pathway, as PKC seems to be required for Wnt-mediated inactivation of GSK-3 kinase. Both pathways seem to involve interactions with G-proteins. Activation by Wnt5A stimulates PKC activity via a G-protein-dependent mechanism. Involved in transduction and intercellular transmission of polarity information during tissue morphogenesis and/or in differentiated tissues. Together with FZD3, is involved in the neural tube closure and plays a role in the regulation of the establishment of planar cell polarity (PCP), particularly in the orientation of asymmetric bundles of stereocilia on the apical faces of a subset of auditory and vestibular sensory cells located in the inner ear. This is Frizzled-6 (Fzd6) from Mus musculus (Mouse).